The chain runs to 716 residues: ATP-dependent DNA helicase DinG (716 aa).

Positions 17-294 (ALQEQIPDFI…TCMEQFRPKT (278 aa)) constitute a Helicase ATP-binding domain. An ATP-binding site is contributed by 54-61 (APTGVGKT). Residue Cys-120 participates in [4Fe-4S] cluster binding. The DEAH box motif lies at 131–134 (EPTQ). [4Fe-4S] cluster is bound by residues Cys-194, Cys-199, and Cys-205. The short motif at 248–251 (DEGH) is the DEAH box element. A Helicase C-terminal domain is found at 517-698 (HIAEMAAFFR…VFPIEQPEVP (182 aa)).

This sequence belongs to the helicase family. DinG subfamily. Type 1 sub-subfamily. The cofactor is [4Fe-4S] cluster.

The catalysed reaction is Couples ATP hydrolysis with the unwinding of duplex DNA at the replication fork by translocating in the 5'-3' direction. This creates two antiparallel DNA single strands (ssDNA). The leading ssDNA polymer is the template for DNA polymerase III holoenzyme which synthesizes a continuous strand.. It catalyses the reaction ATP + H2O = ADP + phosphate + H(+). Its function is as follows. DNA-dependent ATPase and 5'-3' DNA helicase. Unwinds D-loops, R-loops, forked DNA and G-quadruplex DNA. This chain is ATP-dependent DNA helicase DinG, found in Escherichia coli O157:H7.